Consider the following 548-residue polypeptide: Glutamate--tRNA ligase (548 aa).

Positions P102–H112 match the 'HIGH' region motif.

It belongs to the class-I aminoacyl-tRNA synthetase family. Glutamate--tRNA ligase type 2 subfamily.

The protein localises to the cytoplasm. The catalysed reaction is tRNA(Glu) + L-glutamate + ATP = L-glutamyl-tRNA(Glu) + AMP + diphosphate. Its function is as follows. Catalyzes the attachment of glutamate to tRNA(Glu) in a two-step reaction: glutamate is first activated by ATP to form Glu-AMP and then transferred to the acceptor end of tRNA(Glu). In Thermoplasma acidophilum (strain ATCC 25905 / DSM 1728 / JCM 9062 / NBRC 15155 / AMRC-C165), this protein is Glutamate--tRNA ligase.